Here is a 368-residue protein sequence, read N- to C-terminus: tRNA-cytidine(32) 2-sulfurtransferase (368 aa).

The PP-loop motif motif lies at 95–100; the sequence is SGGKDS. [4Fe-4S] cluster-binding residues include Cys-170, Cys-173, and Cys-261.

The protein belongs to the TtcA family. Homodimer. Mg(2+) is required as a cofactor. The cofactor is [4Fe-4S] cluster.

Its subcellular location is the cytoplasm. It carries out the reaction cytidine(32) in tRNA + S-sulfanyl-L-cysteinyl-[cysteine desulfurase] + AH2 + ATP = 2-thiocytidine(32) in tRNA + L-cysteinyl-[cysteine desulfurase] + A + AMP + diphosphate + H(+). It participates in tRNA modification. Its function is as follows. Catalyzes the ATP-dependent 2-thiolation of cytidine in position 32 of tRNA, to form 2-thiocytidine (s(2)C32). The sulfur atoms are provided by the cysteine/cysteine desulfurase (IscS) system. The sequence is that of tRNA-cytidine(32) 2-sulfurtransferase from Psychrobacter sp. (strain PRwf-1).